A 368-amino-acid polypeptide reads, in one-letter code: MDFDSYQHYFYDYDCGEDFYRSTAPSEDIWKKFELVPSPPTSPPWGSGPGAVDPASGINPGEPWPGGGAGDEAESRGHSKAWGRNYASIIRRDCMWSGFSARERLERVVSDRLAPGAPRGNPPKAPATPDGTPSLEASNPAPATQCQLGEPKTQACSGSESPSDSEGEEIDVVTVEKRRSLDIRKPVTITVRADPLDPCMKHFHISIHQQQHNYAARFPPESCSQEGDPEPGPQEEAPEIEAPKEKEEEEEEEEEEEIVSPPPVGSEAPQSCHPKPVSSDTEDVTKRKNHNFLERKRRNDLRSRFLALRDQVPTLASCSKAPKVVILSKALEYLQALVGAEKKMATEKRQLRCRQQQLQKRIAYLSGY.

3 disordered regions span residues 39–79, 112–179, and 218–295; these read PPTS…RGHS, RLAP…EKRR, and FPPE…FLER. Positions 135–147 are enriched in polar residues; that stretch reads LEASNPAPATQCQ. The span at 247 to 258 shows a compositional bias: acidic residues; that stretch reads EEEEEEEEEEEI. A compositionally biased stretch (basic and acidic residues) spans 283 to 294; sequence DVTKRKNHNFLE. A bHLH domain is found at 285–337; sequence TKRKNHNFLERKRRNDLRSRFLALRDQVPTLASCSKAPKVVILSKALEYLQAL. Residues 337–365 form a leucine-zipper region; that stretch reads LVGAEKKMATEKRQLRCRQQQLQKRIAYL.

In terms of assembly, efficient DNA binding requires dimerization with another bHLH protein. Binds DNA as a heterodimer with MAX.

It is found in the nucleus. The protein is Protein L-Myc (Mycl) of Mus musculus (Mouse).